Reading from the N-terminus, the 736-residue chain is MNQNLKNTSWADRIGSDDQERKANSSEVSQSPPPNNSFESSMDSQFSYAHSNKSSISFESIQTTERLLDKLDLSLEDELILQEALLEEENASRNSQLSQTSGPTLCMPASEFPSLRYRTNPSPTYIQARDRSLIIDNLKEKDSTLRGKYSSGKVERHLPVKSRYSYIVEEDYDSETFSGMKPQMNRNEKDYKYPNLENGNRSTNSPNPFNFEKYRIENTRLHHLYPTLISDNNTSVDNNANSKNNRTTSNNINTSTKTDRISEKQSCPNEFTTTQKSNCLYRNGSSTSTNTSFSEVGQLSKPKTQSSFESESSSFSKLKLTKSDTTPIKPSPKRSNSSTSTITKTNTMTNDISLPPTPPYKAHKKKTSLNSLKKLFKSPRTRAKNKKDLESEGSSPIRSATNSLDFSGENIQLPSTSSTINNSSPHLARYIFPPNPVFHFKTASTPQSSTDKKKNSKARPNRTHLRTFSDFHTTEKDSKIGELSALTEQSNKPYHPKVRRRTLSLDGMLPNNSTQCMDSFSHKKEGSNATSKCGKLKFHPEPYDNDESSHIGQAITMRHQGKLEESAQRLKKACACGNKTAFLLYGLALRHGCGVDKNLKLSLGYLMAATDIKSFAAEVLDLDINPLNFASMDDIPDIAPEPTAPALYECGMAYLKGLGMDHPDERKGLKFLEKAALLGHVDSMCLSGTIWSKTSNVKKRDLARAAAWFRIADKKGANLLGSDWIYKEKYMKQGPK.

A compositionally biased stretch (polar residues) spans 1 to 10 (MNQNLKNTSW). Disordered regions lie at residues 1-46 (MNQN…DSQF), 178-208 (SGMKPQMNRNEKDYKYPNLENGNRSTNSPNP), 229-410 (ISDN…SGEN), and 440-461 (FKTASTPQSSTDKKKNSKARPN). The span at 14 to 24 (IGSDDQERKAN) shows a compositional bias: basic and acidic residues. Composition is skewed to polar residues over residues 25–46 (SSEVSQSPPPNNSFESSMDSQF) and 197–208 (ENGNRSTNSPNP). Residues 238–256 (NNANSKNNRTTSNNINTST) are compositionally biased toward low complexity. Residues 264 to 284 (KQSCPNEFTTTQKSNCLYRNG) show a composition bias toward polar residues. 3 stretches are compositionally biased toward low complexity: residues 285-294 (SSTSTNTSFS), 303-318 (KTQSSFESESSSFSKL), and 335-350 (SNSSTSTITKTNTMTN). Residues 374–385 (KLFKSPRTRAKN) show a composition bias toward basic residues. The span at 392-410 (EGSSPIRSATNSLDFSGEN) shows a compositional bias: polar residues.

In Saccharomyces cerevisiae (strain ATCC 204508 / S288c) (Baker's yeast), this protein is Protein DSF2 (DSF2).